We begin with the raw amino-acid sequence, 95 residues long: MAPVIKQQDDLLLNLYIQPKASRDQIVGVHGEELKIAITAPPVDGKANAHLIKYLSKAFKVPKGDINILKGEQGRHKQVKVISPRVIPENISSQL.

This sequence belongs to the UPF0235 family.

The protein is UPF0235 protein Swoo_1329 of Shewanella woodyi (strain ATCC 51908 / MS32).